The primary structure comprises 119 residues: Aspartate 1-decarboxylase (119 aa).

Serine 25 acts as the Schiff-base intermediate with substrate; via pyruvic acid in catalysis. Serine 25 is subject to Pyruvic acid (Ser). A substrate-binding site is contributed by threonine 57. Residue tyrosine 58 is the Proton donor of the active site. 73-75 (GAA) serves as a coordination point for substrate.

This sequence belongs to the PanD family. As to quaternary structure, heterooctamer of four alpha and four beta subunits. Pyruvate serves as cofactor. Post-translationally, is synthesized initially as an inactive proenzyme, which is activated by self-cleavage at a specific serine bond to produce a beta-subunit with a hydroxyl group at its C-terminus and an alpha-subunit with a pyruvoyl group at its N-terminus.

It is found in the cytoplasm. The catalysed reaction is L-aspartate + H(+) = beta-alanine + CO2. It participates in cofactor biosynthesis; (R)-pantothenate biosynthesis; beta-alanine from L-aspartate: step 1/1. In terms of biological role, catalyzes the pyruvoyl-dependent decarboxylation of aspartate to produce beta-alanine. The polypeptide is Aspartate 1-decarboxylase (Herminiimonas arsenicoxydans).